The chain runs to 94 residues: Large ribosomal subunit protein uL23 (94 aa).

The protein belongs to the universal ribosomal protein uL23 family. Part of the 50S ribosomal subunit. Contacts protein L29, and trigger factor when it is bound to the ribosome.

Its function is as follows. One of the early assembly proteins it binds 23S rRNA. One of the proteins that surrounds the polypeptide exit tunnel on the outside of the ribosome. Forms the main docking site for trigger factor binding to the ribosome. The sequence is that of Large ribosomal subunit protein uL23 from Geobacter sp. (strain M21).